Consider the following 323-residue polypeptide: MDARRKHWKDNTFTPFLNEHDFQEAAAPPQPLSEQSSADNHKRMGRVSNFSVRNTQEGNKFKRKDYSSQIAEGEQDSNLRERRMNVSKNDANTNSAFWDSLHLDDATKESSHRRESASAWNKKKLPAATQVTRKKWTEAMPPKLRLHLLNEELGELSLKCREIERDFENAEKELLNFRKEASVKAVNFQEPGTGASKKDRELQALKNDLSEKATNVKNLTEELQQAKEVMYRLSLENRNLKDAVRKLKHQTELNTALLREEMKLFYELEMEKIRLELGAIKNELRVEKTLRVKNSRALEVLGRHVASVVRSSNPADHFTGNIF.

The tract at residues 1-81 is disordered; it reads MDARRKHWKD…EGEQDSNLRE (81 aa). Polar residues predominate over residues 48 to 58; sequence SNFSVRNTQEG. Residues 144–289 are a coiled coil; the sequence is LRLHLLNEEL…IKNELRVEKT (146 aa).

This sequence belongs to the CCDC160 family.

The chain is Coiled-coil domain-containing protein 160 (Ccdc160) from Mus musculus (Mouse).